A 123-amino-acid chain; its full sequence is MRLRRLAGRRPRRRYVAFEVLSLDGPPPGKGEFEEALRGVYLKAFGAESLALARPRIVYYEEESGRGVVAVVRDYRYHILAALGLVRMAGGRRVLVVPLRTSGTVKGALRAFRSPGAPGRGGV.

Belongs to the eukaryotic/archaeal RNase P protein component 2 family. Consists of a catalytic RNA component and at least 4 protein subunits.

It carries out the reaction Endonucleolytic cleavage of RNA, removing 5'-extranucleotides from tRNA precursor.. Its function is as follows. Part of ribonuclease P, a protein complex that generates mature tRNA molecules by cleaving their 5'-ends. This is Ribonuclease P protein component 2 from Aeropyrum pernix (strain ATCC 700893 / DSM 11879 / JCM 9820 / NBRC 100138 / K1).